The sequence spans 330 residues: RNA polymerase sigma factor RpoS (330 aa).

Positions aspartate 56–alanine 89 are sigma-70 factor domain-1. A sigma-70 factor domain-2 region spans residues methionine 94–threonine 164. The short motif at aspartate 118–glutamate 121 is the Interaction with polymerase core subunit RpoC element. Residues glutamate 174–threonine 249 are sigma-70 factor domain-3. Residues tryptophan 262–glutamate 315 form a sigma-70 factor domain-4 region. Residues leucine 288 to valine 307 constitute a DNA-binding region (H-T-H motif).

It belongs to the sigma-70 factor family. RpoS subfamily. In terms of assembly, interacts with the RNA polymerase core enzyme.

It localises to the cytoplasm. Its function is as follows. Sigma factors are initiation factors that promote the attachment of RNA polymerase to specific initiation sites and are then released. This sigma factor is the master transcriptional regulator of the stationary phase and the general stress response. The chain is RNA polymerase sigma factor RpoS from Salmonella dublin.